We begin with the raw amino-acid sequence, 603 residues long: NADH-ubiquinone oxidoreductase chain 5 (603 aa).

17 helical membrane passes run 4–24 (YATM…TTFI), 38–58 (SIVA…LCLD), 87–107 (MMFI…SLWY), 114–134 (INQF…LVTA), 140–160 (LFIG…WWYA), 171–191 (AILY…WFLL), 210–230 (LIPL…LGLH), 241–261 (TPVS…FLLI), 272–292 (LAQT…AVCA), 301–320 (IVAF…IGIG), 325–347 (AFLH…GSII), 370–390 (STSL…TGFY), 407–429 (WALS…MILL), 457–477 (LTIG…PTSV), 482–502 (IPLY…LTAL), 537–557 (IPYL…DLIW), and 582–602 (GLIK…LLLI).

This sequence belongs to the complex I subunit 5 family. In terms of assembly, core subunit of respiratory chain NADH dehydrogenase (Complex I) which is composed of 45 different subunits.

Its subcellular location is the mitochondrion inner membrane. It catalyses the reaction a ubiquinone + NADH + 5 H(+)(in) = a ubiquinol + NAD(+) + 4 H(+)(out). Functionally, core subunit of the mitochondrial membrane respiratory chain NADH dehydrogenase (Complex I) which catalyzes electron transfer from NADH through the respiratory chain, using ubiquinone as an electron acceptor. Essential for the catalytic activity and assembly of complex I. This is NADH-ubiquinone oxidoreductase chain 5 (MT-ND5) from Gorilla gorilla gorilla (Western lowland gorilla).